The following is a 316-amino-acid chain: tRNA dimethylallyltransferase (316 aa).

Residue 17-24 (GPTASGKT) participates in ATP binding. 19-24 (TASGKT) contacts substrate. Interaction with substrate tRNA stretches follow at residues 42–45 (DSAL), 166–170 (QRLSR), 247–252 (RCVGYR), and 280–287 (KRQITWLR).

Belongs to the IPP transferase family. As to quaternary structure, monomer. It depends on Mg(2+) as a cofactor.

The catalysed reaction is adenosine(37) in tRNA + dimethylallyl diphosphate = N(6)-dimethylallyladenosine(37) in tRNA + diphosphate. Its function is as follows. Catalyzes the transfer of a dimethylallyl group onto the adenine at position 37 in tRNAs that read codons beginning with uridine, leading to the formation of N6-(dimethylallyl)adenosine (i(6)A). This is tRNA dimethylallyltransferase from Shigella flexneri serotype 5b (strain 8401).